The primary structure comprises 562 residues: Ribonuclease Y (562 aa).

The helical transmembrane segment at 1-21 (MNMLYFVLALLVGLAGGFFVG) threads the bilayer. Residues 108-129 (AAQDAARERETLSADRQETRRE) are disordered. The KH domain occupies 252–312 (SVSVVPIPND…VRREVARHVL (61 aa)). The HD domain occupies 378-471 (VLKHSVQVAH…VAAADAISAA (94 aa)).

It belongs to the RNase Y family.

It is found in the cell membrane. Functionally, endoribonuclease that initiates mRNA decay. In Deinococcus geothermalis (strain DSM 11300 / CIP 105573 / AG-3a), this protein is Ribonuclease Y.